The following is a 278-amino-acid chain: Formamidopyrimidine-DNA glycosylase (278 aa).

The Schiff-base intermediate with DNA role is filled by Pro-2. The Proton donor role is filled by Glu-3. Catalysis depends on Lys-59, which acts as the Proton donor; for beta-elimination activity. 3 residues coordinate DNA: His-93, Arg-112, and Arg-153. The FPG-type zinc finger occupies 238–272; sequence NVYDRAGEPCPRCQSTIERIVVAQRSTYFCPTCQI. The active-site Proton donor; for delta-elimination activity is Arg-262.

The protein belongs to the FPG family. In terms of assembly, monomer. Requires Zn(2+) as cofactor.

It carries out the reaction Hydrolysis of DNA containing ring-opened 7-methylguanine residues, releasing 2,6-diamino-4-hydroxy-5-(N-methyl)formamidopyrimidine.. The catalysed reaction is 2'-deoxyribonucleotide-(2'-deoxyribose 5'-phosphate)-2'-deoxyribonucleotide-DNA = a 3'-end 2'-deoxyribonucleotide-(2,3-dehydro-2,3-deoxyribose 5'-phosphate)-DNA + a 5'-end 5'-phospho-2'-deoxyribonucleoside-DNA + H(+). Its function is as follows. Involved in base excision repair of DNA damaged by oxidation or by mutagenic agents. Acts as a DNA glycosylase that recognizes and removes damaged bases. Has a preference for oxidized purines, such as 7,8-dihydro-8-oxoguanine (8-oxoG). Has AP (apurinic/apyrimidinic) lyase activity and introduces nicks in the DNA strand. Cleaves the DNA backbone by beta-delta elimination to generate a single-strand break at the site of the removed base with both 3'- and 5'-phosphates. This Chloroflexus aurantiacus (strain ATCC 29366 / DSM 635 / J-10-fl) protein is Formamidopyrimidine-DNA glycosylase.